Here is a 576-residue protein sequence, read N- to C-terminus: Proline--tRNA ligase (576 aa).

The protein belongs to the class-II aminoacyl-tRNA synthetase family. ProS type 1 subfamily. Homodimer.

Its subcellular location is the cytoplasm. The catalysed reaction is tRNA(Pro) + L-proline + ATP = L-prolyl-tRNA(Pro) + AMP + diphosphate. Functionally, catalyzes the attachment of proline to tRNA(Pro) in a two-step reaction: proline is first activated by ATP to form Pro-AMP and then transferred to the acceptor end of tRNA(Pro). As ProRS can inadvertently accommodate and process non-cognate amino acids such as alanine and cysteine, to avoid such errors it has two additional distinct editing activities against alanine. One activity is designated as 'pretransfer' editing and involves the tRNA(Pro)-independent hydrolysis of activated Ala-AMP. The other activity is designated 'posttransfer' editing and involves deacylation of mischarged Ala-tRNA(Pro). The misacylated Cys-tRNA(Pro) is not edited by ProRS. The sequence is that of Proline--tRNA ligase from Leptospira interrogans serogroup Icterohaemorrhagiae serovar Lai (strain 56601).